The following is a 281-amino-acid chain: MNKTVIKNKLKQESFVPSKKMGQNFLLSNEIKNKIVNVANISKDDLILEIGPGWGAITELLVQKTDTLVAIELDKRLYAHLKTYIKAPNFHIINNDVLCVDLDKLILDYTNTKKNQKIKVVANLPYAISSKIVLKIIQSKLINDAYIMVQKEMAERIGAKVNTRGYNAFTVLVQLFCKTKILFQVNAKEFHPQPKVQSAVIHLENLHNKVDFDIEQVSKFLRICFLNKRKKLKNNLSNIYDIKLVNEMFIDYNLDMNLRAENIEPKMFLELFNYLNKSNNE.

Residues Asn24, Leu26, Gly51, Glu72, Asp96, and Asn123 each contribute to the S-adenosyl-L-methionine site.

It belongs to the class I-like SAM-binding methyltransferase superfamily. rRNA adenine N(6)-methyltransferase family. RsmA subfamily.

It localises to the cytoplasm. It carries out the reaction adenosine(1518)/adenosine(1519) in 16S rRNA + 4 S-adenosyl-L-methionine = N(6)-dimethyladenosine(1518)/N(6)-dimethyladenosine(1519) in 16S rRNA + 4 S-adenosyl-L-homocysteine + 4 H(+). In terms of biological role, specifically dimethylates two adjacent adenosines (A1518 and A1519) in the loop of a conserved hairpin near the 3'-end of 16S rRNA in the 30S particle. May play a critical role in biogenesis of 30S subunits. The protein is Ribosomal RNA small subunit methyltransferase A of Ureaplasma urealyticum serovar 10 (strain ATCC 33699 / Western).